The following is a 195-amino-acid chain: Small ribosomal subunit protein eS1 (195 aa).

It belongs to the eukaryotic ribosomal protein eS1 family.

This Methanothermobacter thermautotrophicus (strain ATCC 29096 / DSM 1053 / JCM 10044 / NBRC 100330 / Delta H) (Methanobacterium thermoautotrophicum) protein is Small ribosomal subunit protein eS1.